We begin with the raw amino-acid sequence, 264 residues long: Thiazole synthase (264 aa).

Residue Lys-106 is the Schiff-base intermediate with DXP of the active site. Residues Gly-167, 193–194 (AG), and 215–216 (NS) contribute to the 1-deoxy-D-xylulose 5-phosphate site.

The protein belongs to the ThiG family. In terms of assembly, homotetramer. Forms heterodimers with either ThiH or ThiS.

The protein resides in the cytoplasm. The catalysed reaction is [ThiS sulfur-carrier protein]-C-terminal-Gly-aminoethanethioate + 2-iminoacetate + 1-deoxy-D-xylulose 5-phosphate = [ThiS sulfur-carrier protein]-C-terminal Gly-Gly + 2-[(2R,5Z)-2-carboxy-4-methylthiazol-5(2H)-ylidene]ethyl phosphate + 2 H2O + H(+). It functions in the pathway cofactor biosynthesis; thiamine diphosphate biosynthesis. Its function is as follows. Catalyzes the rearrangement of 1-deoxy-D-xylulose 5-phosphate (DXP) to produce the thiazole phosphate moiety of thiamine. Sulfur is provided by the thiocarboxylate moiety of the carrier protein ThiS. In vitro, sulfur can be provided by H(2)S. This Prochlorococcus marinus (strain MIT 9301) protein is Thiazole synthase.